The sequence spans 208 residues: N-hydroxyputrescine acetyltransferase (208 aa).

The protein belongs to the IucB family.

The enzyme catalyses N-hydroxyputrescine + acetyl-CoA = N(1)-acetyl-N(1)-hydroxyputrescine + CoA. It functions in the pathway siderophore biosynthesis. Functionally, N-acetyltransferase involved in the biosynthesis of fimsbactin A, the major siderophore produced by A.baumannii. Catalyzes the acetylation of N-hydroxyputrescine to form N(1)-acetyl-N(1)-hydroxyputrescine (ahPutr). The sequence is that of N-hydroxyputrescine acetyltransferase from Acinetobacter baumannii (strain ATCC 17978 / DSM 105126 / CIP 53.77 / LMG 1025 / NCDC KC755 / 5377).